The following is a 194-amino-acid chain: UPF0301 protein CBU_2093 (194 aa).

It belongs to the UPF0301 (AlgH) family.

This Coxiella burnetii (strain RSA 493 / Nine Mile phase I) protein is UPF0301 protein CBU_2093.